Reading from the N-terminus, the 294-residue chain is Diphthine synthase (294 aa).

Residues Asp93, Val96, 121 to 122, Leu173, and Ala220 contribute to the S-adenosyl-L-methionine site; that span reads SG.

The protein belongs to the diphthine synthase family. As to quaternary structure, homodimer.

The catalysed reaction is 2-[(3S)-amino-3-carboxypropyl]-L-histidyl-[translation elongation factor 2] + 3 S-adenosyl-L-methionine = diphthine-[translation elongation factor 2] + 3 S-adenosyl-L-homocysteine + 3 H(+). The protein operates within protein modification; peptidyl-diphthamide biosynthesis. Functionally, S-adenosyl-L-methionine-dependent methyltransferase that catalyzes the trimethylation of the amino group of the modified target histidine residue in translation elongation factor 2 (EF-2), to form an intermediate called diphthine. The three successive methylation reactions represent the second step of diphthamide biosynthesis. This is Diphthine synthase (dphB) from Aeropyrum pernix (strain ATCC 700893 / DSM 11879 / JCM 9820 / NBRC 100138 / K1).